Consider the following 349-residue polypeptide: MKTLTTDVAIIGAGPVGLFQIFELGLQGLSTVVIDSLPEIGGQCSELYPDKPIYDIPALPNAKASEVIDNLWQQAAIFDPTFLLAERVEHIEKVSEHSFIVTTHKQTQIHCRAVVIAAGNGAFSPVKLKLPLIDKFEDTQLFYRISNIEHFRDKNVVVLGGGDSALDWSLTLQKTAKSVLLIHRSSNFKAAKSSVNKMYELCEQLKMQFLCGQVSSFQEKENKLTGLTITSKDGVNRRVELDELVVLFGMSPKLGPIDNWQLEMHQHQIKVDTQSFQTSVTGIYAVGDINYYPGKRKLILSGFHEAALAAFSIAETVLEKDRIPTLYTTTSPVVHQRLGVEHSLEAMLS.

FAD-binding residues include Asp35, Gln43, Tyr48, Val88, Phe123, Asp288, and Thr329.

This sequence belongs to the ferredoxin--NADP reductase type 2 family. Homodimer. It depends on FAD as a cofactor.

It catalyses the reaction 2 reduced [2Fe-2S]-[ferredoxin] + NADP(+) + H(+) = 2 oxidized [2Fe-2S]-[ferredoxin] + NADPH. The sequence is that of Ferredoxin--NADP reductase from Colwellia psychrerythraea (strain 34H / ATCC BAA-681) (Vibrio psychroerythus).